Here is a 345-residue protein sequence, read N- to C-terminus: Selenide, water dikinase (345 aa).

C16 is a catalytic residue. Residues K19 and 46-48 contribute to the ATP site; that span reads TSD. D49 contributes to the Mg(2+) binding site. Residues D66, D89, and 136–138 contribute to the ATP site; that span reads GHT. Mg(2+) is bound at residue D89. D224 serves as a coordination point for Mg(2+).

The protein belongs to the selenophosphate synthase 1 family. Class I subfamily. Homodimer. The cofactor is Mg(2+).

It carries out the reaction hydrogenselenide + ATP + H2O = selenophosphate + AMP + phosphate + 2 H(+). In terms of biological role, synthesizes selenophosphate from selenide and ATP. The protein is Selenide, water dikinase of Clostridium botulinum (strain Alaska E43 / Type E3).